The primary structure comprises 473 residues: Photosystem II CP43 reaction center protein (473 aa).

Residues 1-14 constitute a propeptide that is removed on maturation; it reads MKTLYSLRRYFHVE. Thr-15 is subject to N-acetylthreonine. Thr-15 bears the Phosphothreonine mark. A run of 5 helical transmembrane segments spans residues 69-93, 134-155, 178-200, 255-275, and 291-312; these read LFEV…PHLA, LIGP…KDKN, KAMY…RVIS, KPFA…LSYS, and WFNN…ASQA. Glu-367 lines the [CaMn4O5] cluster pocket. A helical membrane pass occupies residues 447 to 471; the sequence is RARAAAAGFEKGIDRDTEPVLSMRP.

The protein belongs to the PsbB/PsbC family. PsbC subfamily. As to quaternary structure, PSII is composed of 1 copy each of membrane proteins PsbA, PsbB, PsbC, PsbD, PsbE, PsbF, PsbH, PsbI, PsbJ, PsbK, PsbL, PsbM, PsbT, PsbX, PsbY, PsbZ, Psb30/Ycf12, at least 3 peripheral proteins of the oxygen-evolving complex and a large number of cofactors. It forms dimeric complexes. Binds multiple chlorophylls and provides some of the ligands for the Ca-4Mn-5O cluster of the oxygen-evolving complex. It may also provide a ligand for a Cl- that is required for oxygen evolution. PSII binds additional chlorophylls, carotenoids and specific lipids. serves as cofactor.

It localises to the plastid. Its subcellular location is the chloroplast thylakoid membrane. One of the components of the core complex of photosystem II (PSII). It binds chlorophyll and helps catalyze the primary light-induced photochemical processes of PSII. PSII is a light-driven water:plastoquinone oxidoreductase, using light energy to abstract electrons from H(2)O, generating O(2) and a proton gradient subsequently used for ATP formation. The protein is Photosystem II CP43 reaction center protein of Ostreococcus tauri.